A 300-amino-acid polypeptide reads, in one-letter code: Energy-coupling factor transporter ATP-binding protein EcfA2 (300 aa).

An ABC transporter domain is found at I3 to L258. G40–T47 is a binding site for ATP.

The protein belongs to the ABC transporter superfamily. Energy-coupling factor EcfA family. Forms a stable energy-coupling factor (ECF) transporter complex composed of 2 membrane-embedded substrate-binding proteins (S component), 2 ATP-binding proteins (A component) and 2 transmembrane proteins (T component).

The protein localises to the cell membrane. Functionally, ATP-binding (A) component of a common energy-coupling factor (ECF) ABC-transporter complex. Unlike classic ABC transporters this ECF transporter provides the energy necessary to transport a number of different substrates. In Mesomycoplasma hyopneumoniae (strain 232) (Mycoplasma hyopneumoniae), this protein is Energy-coupling factor transporter ATP-binding protein EcfA2.